Here is an 89-residue protein sequence, read N- to C-terminus: Small ribosomal subunit protein uS17 (89 aa).

The protein belongs to the universal ribosomal protein uS17 family. As to quaternary structure, part of the 30S ribosomal subunit.

One of the primary rRNA binding proteins, it binds specifically to the 5'-end of 16S ribosomal RNA. The polypeptide is Small ribosomal subunit protein uS17 (Delftia acidovorans (strain DSM 14801 / SPH-1)).